The following is an 88-amino-acid chain: Small ribosomal subunit protein bS20 (88 aa).

Disordered regions lie at residues 1 to 25 and 61 to 88; these read MANS…KARR and GVTK…ALGA.

It belongs to the bacterial ribosomal protein bS20 family.

In terms of biological role, binds directly to 16S ribosomal RNA. This chain is Small ribosomal subunit protein bS20, found in Jannaschia sp. (strain CCS1).